We begin with the raw amino-acid sequence, 591 residues long: MAKEKIIGIDLGTTNSVVSVIEGGQPIILENPEGQRTTPSVVAFKNSDIIVGGAAKRQAVTNPNVVQSIKSKMGTTSKVNLEGKDYSPEQISAEILRYMKNYAEAKLGQKVTKAVITVPAYFNDAQRKATKDAGTIAGLQVERIINEPTAAALAYGLDKQDKEETILVYDLGGGTFDVSILAIGGGSFDVIATSGNNKLGGDNFDEEIIKWLLGKIKAEYNIDLSKEKMALQRLKDEAEKAKINLSSQLEVEINLPFIAMNESGPISFATTLTRSEFNKITKHLVDLTIQPVKDALSAAKKTPSEINEVLLVGGSTRIPAVQELVKSLLNKEPNRSINPDEVVAMGAAVQGGVLAGEVTDILLLDVTPLSLGIETMGGVMTKLIERNTTIPAKRTQIFSTATDNQPAVDINVLQGERAMAADNKSLGQFQLTGIQPAPRGVPQIEVTFEIDANGIVSVSAKDKNTNEEKTITISNSGNLSEAEVERMIKEAQENAANDEVKKKNIELKNKAENYINIIENSLLQAGDKISAEQKEQSQKMVDEIKELVKNENYEALEQKMAELEQAMAQAAEFANKQNESDPNNNSSEQNN.

Residue Thr175 is modified to Phosphothreonine; by autocatalysis. Positions 568 to 577 are enriched in low complexity; it reads AQAAEFANKQ. The interval 568 to 591 is disordered; the sequence is AQAAEFANKQNESDPNNNSSEQNN. The span at 580–591 shows a compositional bias: polar residues; it reads SDPNNNSSEQNN.

It belongs to the heat shock protein 70 family.

Acts as a chaperone. This Mycoplasma mycoides subsp. mycoides SC (strain CCUG 32753 / NCTC 10114 / PG1) protein is Chaperone protein DnaK.